Consider the following 152-residue polypeptide: Transcriptional regulator MraZ (152 aa).

2 SpoVT-AbrB domains span residues 5-52 and 81-124; these read ATMV…TLPA and ASEC…DEQT.

This sequence belongs to the MraZ family. Forms oligomers.

It localises to the cytoplasm. Its subcellular location is the nucleoid. Negatively regulates its own expression and that of the subsequent genes in the proximal part of the division and cell wall (dcw) gene cluster. Acts by binding directly to DNA. May also regulate the expression of genes outside the dcw cluster. This Yersinia enterocolitica serotype O:8 / biotype 1B (strain NCTC 13174 / 8081) protein is Transcriptional regulator MraZ.